Consider the following 83-residue polypeptide: Exodeoxyribonuclease 7 small subunit (83 aa).

Belongs to the XseB family. As to quaternary structure, heterooligomer composed of large and small subunits.

It localises to the cytoplasm. It catalyses the reaction Exonucleolytic cleavage in either 5'- to 3'- or 3'- to 5'-direction to yield nucleoside 5'-phosphates.. Functionally, bidirectionally degrades single-stranded DNA into large acid-insoluble oligonucleotides, which are then degraded further into small acid-soluble oligonucleotides. The sequence is that of Exodeoxyribonuclease 7 small subunit from Rhodopseudomonas palustris (strain HaA2).